We begin with the raw amino-acid sequence, 433 residues long: GTPase Obg (433 aa).

An Obg domain is found at 1–159 (MKFVDSADLI…FEIRAELKVL (159 aa)). One can recognise an OBG-type G domain in the interval 160 to 332 (ADVGFVGLPN…LLFMIYEELK (173 aa)). GTP is bound by residues 166-173 (GLPNAGKS), 191-195 (FTTIN), 213-216 (DLPG), 284-287 (NKMD), and 313-315 (SGL). Mg(2+)-binding residues include Ser173 and Thr193. The OCT domain occupies 355 to 433 (KFEEQKEDIQ…VFDYELEWTD (79 aa)).

This sequence belongs to the TRAFAC class OBG-HflX-like GTPase superfamily. OBG GTPase family. Monomer. Mg(2+) serves as cofactor.

The protein resides in the cytoplasm. Its function is as follows. An essential GTPase which binds GTP, GDP and possibly (p)ppGpp with moderate affinity, with high nucleotide exchange rates and a fairly low GTP hydrolysis rate. Plays a role in control of the cell cycle, stress response, ribosome biogenesis and in those bacteria that undergo differentiation, in morphogenesis control. The chain is GTPase Obg from Mycoplasma capricolum subsp. capricolum (strain California kid / ATCC 27343 / NCTC 10154).